The sequence spans 104 residues: Nucleoid-associated protein Moth_0028 (104 aa).

It belongs to the YbaB/EbfC family. Homodimer.

It is found in the cytoplasm. The protein resides in the nucleoid. Binds to DNA and alters its conformation. May be involved in regulation of gene expression, nucleoid organization and DNA protection. The protein is Nucleoid-associated protein Moth_0028 of Moorella thermoacetica (strain ATCC 39073 / JCM 9320).